Here is a 195-residue protein sequence, read N- to C-terminus: Dual-action ribosomal maturation protein DarP (195 aa).

Belongs to the DarP family.

It is found in the cytoplasm. Functionally, member of a network of 50S ribosomal subunit biogenesis factors which assembles along the 30S-50S interface, preventing incorrect 23S rRNA structures from forming. Promotes peptidyl transferase center (PTC) maturation. The polypeptide is Dual-action ribosomal maturation protein DarP (Stenotrophomonas maltophilia (strain K279a)).